Reading from the N-terminus, the 93-residue chain is Large ribosomal subunit protein uL23 (93 aa).

Belongs to the universal ribosomal protein uL23 family. As to quaternary structure, part of the 50S ribosomal subunit. Contacts protein L29, and trigger factor when it is bound to the ribosome.

In terms of biological role, one of the early assembly proteins it binds 23S rRNA. One of the proteins that surrounds the polypeptide exit tunnel on the outside of the ribosome. Forms the main docking site for trigger factor binding to the ribosome. The sequence is that of Large ribosomal subunit protein uL23 from Helicobacter pylori (strain P12).